Consider the following 571-residue polypeptide: Putative phospholipase B-like 1 (571 aa).

A signal peptide spans 1–18 (MNWIFIFLAAAVAIGCEA). 4 N-linked (GlcNAc...) asparagine glycosylation sites follow: asparagine 62, asparagine 149, asparagine 442, and asparagine 473.

This sequence belongs to the phospholipase B-like family.

It is found in the lysosome. Putative phospholipase. The polypeptide is Putative phospholipase B-like 1 (Caenorhabditis elegans).